We begin with the raw amino-acid sequence, 191 residues long: Shikimate kinase (191 aa).

Residue 14–19 (GSGKST) coordinates ATP. Ser-18 contacts Mg(2+). Residues Asp-36, Arg-60, and Gly-82 each contribute to the substrate site. Arg-120 provides a ligand contact to ATP. Arg-147 is a binding site for substrate.

It belongs to the shikimate kinase family. Monomer. Requires Mg(2+) as cofactor.

The protein resides in the cytoplasm. It carries out the reaction shikimate + ATP = 3-phosphoshikimate + ADP + H(+). Its pathway is metabolic intermediate biosynthesis; chorismate biosynthesis; chorismate from D-erythrose 4-phosphate and phosphoenolpyruvate: step 5/7. In terms of biological role, catalyzes the specific phosphorylation of the 3-hydroxyl group of shikimic acid using ATP as a cosubstrate. The protein is Shikimate kinase of Chlorobaculum tepidum (strain ATCC 49652 / DSM 12025 / NBRC 103806 / TLS) (Chlorobium tepidum).